The primary structure comprises 136 residues: MMDQEEKTEEGSGPCAEAGSPDQEGFFNLLSHVQGDRMEGQRCSLQAGPGQTTKSQSDPTPEMDSLMDMLASTQGRRMDDQRVTVSSLPGFQPVGSKDGAQKRAGTLSPQPLLTPQDPTALGFRRNSSPQPPTQAP.

Disordered regions lie at residues 1-64 (MMDQ…PEMD) and 86-136 (SSLP…TQAP). The region spanning 23–45 (QEGFFNLLSHVQGDRMEGQRCSL) is the GoLoco 1 domain. A compositionally biased stretch (polar residues) spans 49–59 (PGQTTKSQSDP). The region spanning 63-85 (MDSLMDMLASTQGRRMDDQRVTV) is the GoLoco 2 domain. Positions 107–117 (LSPQPLLTPQD) are enriched in polar residues. Ser127 carries the post-translational modification Phosphoserine.

Its function is as follows. May function as a cell-type specific modulator for G protein-mediated cell signaling. This chain is Purkinje cell protein 2 homolog (PCP2), found in Homo sapiens (Human).